The primary structure comprises 429 residues: Phosphoribosylamine--glycine ligase (429 aa).

The ATP-grasp domain occupies 109–316 (KDFLARHQIP…LVDLCLAACD (208 aa)). Position 135 to 196 (135 to 196 (LREKGAPIVI…EEFLDGEEAS (62 aa))) interacts with ATP. Mg(2+)-binding residues include Glu-286 and Asn-288.

Belongs to the GARS family. Monomer. Mg(2+) is required as a cofactor. Requires Mn(2+) as cofactor.

It carries out the reaction 5-phospho-beta-D-ribosylamine + glycine + ATP = N(1)-(5-phospho-beta-D-ribosyl)glycinamide + ADP + phosphate + H(+). It functions in the pathway purine metabolism; IMP biosynthesis via de novo pathway; N(1)-(5-phospho-D-ribosyl)glycinamide from 5-phospho-alpha-D-ribose 1-diphosphate: step 2/2. The sequence is that of Phosphoribosylamine--glycine ligase from Salmonella typhi.